Here is a 495-residue protein sequence, read N- to C-terminus: UDP-N-acetylmuramoyl-L-alanyl-D-glutamate--2,6-diaminopimelate ligase (495 aa).

UDP-N-acetyl-alpha-D-muramoyl-L-alanyl-D-glutamate-binding positions include Leu-27, Ser-29, and 44 to 46 (HQA). 116–122 (GTNGKTT) contributes to the ATP binding site. Residues Asn-157, 158–159 (TT), Ser-185, Gln-191, and Arg-193 each bind UDP-N-acetyl-alpha-D-muramoyl-L-alanyl-D-glutamate. Position 225 is an N6-carboxylysine (Lys-225). Residues Arg-390, 414 to 417 (DNPR), Gly-465, and Glu-469 contribute to the meso-2,6-diaminopimelate site. The short motif at 414-417 (DNPR) is the Meso-diaminopimelate recognition motif element.

The protein belongs to the MurCDEF family. MurE subfamily. Mg(2+) is required as a cofactor. Post-translationally, carboxylation is probably crucial for Mg(2+) binding and, consequently, for the gamma-phosphate positioning of ATP.

Its subcellular location is the cytoplasm. The enzyme catalyses UDP-N-acetyl-alpha-D-muramoyl-L-alanyl-D-glutamate + meso-2,6-diaminopimelate + ATP = UDP-N-acetyl-alpha-D-muramoyl-L-alanyl-gamma-D-glutamyl-meso-2,6-diaminopimelate + ADP + phosphate + H(+). The protein operates within cell wall biogenesis; peptidoglycan biosynthesis. Its function is as follows. Catalyzes the addition of meso-diaminopimelic acid to the nucleotide precursor UDP-N-acetylmuramoyl-L-alanyl-D-glutamate (UMAG) in the biosynthesis of bacterial cell-wall peptidoglycan. The protein is UDP-N-acetylmuramoyl-L-alanyl-D-glutamate--2,6-diaminopimelate ligase of Salmonella choleraesuis (strain SC-B67).